Here is a 333-residue protein sequence, read N- to C-terminus: Fructose-1,6-bisphosphatase class 1 (333 aa).

Positions 92, 113, 115, and 116 each coordinate Mg(2+). Residues 116 to 119, N209, Y242, and K272 each bind substrate; that span reads DGSS. E278 lines the Mg(2+) pocket.

The protein belongs to the FBPase class 1 family. As to quaternary structure, homotetramer. Mg(2+) is required as a cofactor.

The protein resides in the cytoplasm. It carries out the reaction beta-D-fructose 1,6-bisphosphate + H2O = beta-D-fructose 6-phosphate + phosphate. The protein operates within carbohydrate biosynthesis; Calvin cycle. This is Fructose-1,6-bisphosphatase class 1 from Chlorobium phaeobacteroides (strain BS1).